A 1191-amino-acid chain; its full sequence is Putative glycoside hydrolase 22789 (1191 aa).

A compositionally biased stretch (low complexity) spans 173-187; it reads PSSSGASSVLPSPSA. Residues 173–221 are disordered; sequence PSSSGASSVLPSPSAHTPDAATDANHLPNPDPASGRQELTRAGRPARKK.

The protein belongs to the glycoside hydrolase-like 3 (GHL3) family.

The polypeptide is Putative glycoside hydrolase 22789 (Monosiga brevicollis (Choanoflagellate)).